An 807-amino-acid polypeptide reads, in one-letter code: Mechanosensitive cation channel TMEM63A (807 aa).

Topologically, residues 1–51 are extracellular; it reads MTDSPFLELWQSRAVSVREQLGLGDRPNDSYCYNSAKNSTVLQGVTFGGIP. The N-linked (GlcNAc...) asparagine glycan is linked to Asn38. Residues 52–74 form a helical membrane-spanning segment; that stretch reads TVLLIDVSCFLFLILVFSIIRRR. The Cytoplasmic segment spans residues 75–134; sequence FWDYGRIALVSEADSEPRFQRLSSTSSSGQQDFENELGCCPWLTAIFRLHDDQILEWCGE. The chain crosses the membrane as a helical span at residues 135-167; the sequence is DAIHYLSFQRHIIFLLVVVSFLSLCVILPVNLS. Residues 168–191 are Extracellular-facing; that stretch reads GDLLDKDPYSFGRTTIANLQTDND. A helical transmembrane segment spans residues 192 to 217; the sequence is LLWLHTIFAVIYLFLTVGFMRHHTQS. Topologically, residues 218–416 are cytoplasmic; that stretch reads IKYKEENLVR…CWKNLSIQGL (199 aa). The interval 219-414 is intracellular linker IL2; confers mechanosensitivity; it reads KYKEENLVRR…DICWKNLSIQ (196 aa). A helical transmembrane segment spans residues 417-444; sequence RWWLQWLGINFTLFLGLFFLTTPSIILS. Over 445–462 the chain is Extracellular; that stretch reads TMDKFNVTKPIHALNNPI. A glycan (N-linked (GlcNAc...) asparagine) is linked at Asn450. Residues 463-490 traverse the membrane as a helical segment; it reads ISQFFPTLLLWSFSALLPSIVYYSTLLE. Residues 491 to 495 are Cytoplasmic-facing; sequence SHWTK. The helical transmembrane segment at 496-532 threads the bilayer; it reads SGENQIMMTKVYIFLIFMVLILPSLGLTSLDFFFRWL. Over 533–554 the chain is Extracellular; sequence FDKTSSEASIRLECVFLPDQGA. The chain crosses the membrane as a helical span at residues 555 to 586; sequence FFVNYVIASAFIGNGMELLRLPGLILYTFRMI. Residues 555–586 form a gating helix region; the sequence is FFVNYVIASAFIGNGMELLRLPGLILYTFRMI. At 587–606 the chain is on the cytoplasmic side; sequence MAKTAADRRNVKQNQAFQYE. The chain crosses the membrane as a helical span at residues 607–624; sequence FGAMYAWMLCVFTVIMAY. The Extracellular segment spans residues 625–628; it reads SITC. The chain crosses the membrane as a helical span at residues 629–651; the sequence is PIIAPFGLIYILLKHMVDRHNLY. The Cytoplasmic segment spans residues 652-661; that stretch reads FIYLPAKLEK. The chain crosses the membrane as a helical span at residues 662 to 689; it reads GIHFAAVNQALAAPILCLFWLYFFSFLR. Over 690–694 the chain is Extracellular; the sequence is LGMKA. The chain crosses the membrane as a helical span at residues 695-709; sequence PATLFTFLVVLLTIL. At 710–807 the chain is on the cytoplasmic side; sequence VCLAHTCFGY…GSVAAAPQEA (98 aa). Ser739 bears the Phosphoserine mark.

This sequence belongs to the CSC1 (TC 1.A.17) family. In terms of assembly, monomer. In terms of processing, N-Glycosylated.

The protein localises to the lysosome membrane. It localises to the early endosome membrane. The protein resides in the cell membrane. The catalysed reaction is Ca(2+)(in) = Ca(2+)(out). In terms of biological role, mechanosensitive cation channel with low conductance and high activation threshold. In contrast to TMEM63B, does not show phospholipid scramblase activity. Acts as a regulator of lysosomal morphology by mediating lysosomal mechanosensitivity. Important for the baby's first breath and respiration throughout life. Upon lung inflation conducts cation currents in alveolar type 1 and 2 cells triggering lamellar body exocytosis and surfactant secretion into airspace. Also acts as an osmosensitive cation channel preferentially activated by hypotonic stress. The sequence is that of Mechanosensitive cation channel TMEM63A (TMEM63A) from Pongo abelii (Sumatran orangutan).